The chain runs to 460 residues: UDP-N-acetylmuramoylalanine--D-glutamate ligase (460 aa).

ATP is bound at residue 120-126 (GSNGKTT).

Belongs to the MurCDEF family.

The protein resides in the cytoplasm. The catalysed reaction is UDP-N-acetyl-alpha-D-muramoyl-L-alanine + D-glutamate + ATP = UDP-N-acetyl-alpha-D-muramoyl-L-alanyl-D-glutamate + ADP + phosphate + H(+). The protein operates within cell wall biogenesis; peptidoglycan biosynthesis. Cell wall formation. Catalyzes the addition of glutamate to the nucleotide precursor UDP-N-acetylmuramoyl-L-alanine (UMA). The polypeptide is UDP-N-acetylmuramoylalanine--D-glutamate ligase (Lactobacillus delbrueckii subsp. bulgaricus (strain ATCC BAA-365 / Lb-18)).